Consider the following 128-residue polypeptide: Small ribosomal subunit protein eS8 (128 aa).

Belongs to the eukaryotic ribosomal protein eS8 family. In terms of assembly, part of the 30S ribosomal subunit.

The chain is Small ribosomal subunit protein eS8 from Methanococcus vannielii (strain ATCC 35089 / DSM 1224 / JCM 13029 / OCM 148 / SB).